Reading from the N-terminus, the 577-residue chain is Hemagglutinin-neuraminidase (577 aa).

Topologically, residues 1-22 (MDRAVSQVALENDEREAKNTWR) are intravirion. Residues 23–45 (LIFRIAILLLTVVTLATSVASLV) form a helical membrane-spanning segment. Over 46–571 (YSMGASTPSD…LVEILKNDGV (526 aa)) the chain is Virion surface. Asparagine 119 and asparagine 144 each carry an N-linked (GlcNAc...) asparagine; by host glycan. Residues 124–152 (GAPIHDPDFIGGIGKELIVDNASDVTSFY) are important for interaction with fusion/F protein. Intrachain disulfides connect cysteine 172-cysteine 196, cysteine 186-cysteine 247, and cysteine 238-cysteine 251. Residues 234–239 (NRKSCS) are involved in neuraminidase activity. N-linked (GlcNAc...) asparagine; by host glycosylation is found at asparagine 341 and asparagine 433. 2 disulfide bridges follow: cysteine 344–cysteine 461 and cysteine 455–cysteine 465. Asparagine 481 and asparagine 538 each carry an N-linked (GlcNAc...) asparagine; by host glycan. Residues cysteine 531 and cysteine 542 are joined by a disulfide bond.

Belongs to the paramyxoviruses hemagglutinin-neuraminidase family. Homotetramer; composed of disulfide-linked homodimers. Interacts with F protein trimer. Interacts with host CG-1B; this interaction inhibits viral adsorption and replication rather than internalization.

It is found in the virion membrane. It localises to the host cell membrane. The catalysed reaction is Hydrolysis of alpha-(2-&gt;3)-, alpha-(2-&gt;6)-, alpha-(2-&gt;8)- glycosidic linkages of terminal sialic acid residues in oligosaccharides, glycoproteins, glycolipids, colominic acid and synthetic substrates.. Functionally, mediates the viral entry into the host cell together with fusion/F protein. Attaches the virus to sialic acid-containing cell receptors and thereby initiates infection. Binding of HN protein to the receptor induces a conformational change that allows the F protein to trigger virion/cell membranes fusion. Its function is as follows. Neuraminidase activity ensures the efficient spread of the virus by dissociating the mature virions from the neuraminic acid containing glycoproteins. The protein is Hemagglutinin-neuraminidase (HN) of Gallus gallus (Chicken).